Reading from the N-terminus, the 318-residue chain is Ribosomal RNA small subunit methyltransferase H (318 aa).

S-adenosyl-L-methionine contacts are provided by residues 34-36 (GGH), D53, F82, D103, and Q110.

This sequence belongs to the methyltransferase superfamily. RsmH family.

It is found in the cytoplasm. The catalysed reaction is cytidine(1402) in 16S rRNA + S-adenosyl-L-methionine = N(4)-methylcytidine(1402) in 16S rRNA + S-adenosyl-L-homocysteine + H(+). In terms of biological role, specifically methylates the N4 position of cytidine in position 1402 (C1402) of 16S rRNA. The sequence is that of Ribosomal RNA small subunit methyltransferase H from Limosilactobacillus reuteri (strain DSM 20016) (Lactobacillus reuteri).